Consider the following 727-residue polypeptide: UvrABC system protein C (727 aa).

In terms of domain architecture, GIY-YIG spans 16–95; the sequence is VDPGVYKFRD…IKEFDPRFNV (80 aa). One can recognise a UVR domain in the interval 208–243; sequence DRLVRQLEARMQEASEELDFETAARLRDDVGALRRA. Disordered regions lie at residues 503 to 527 and 679 to 727; these read DADQ…QTGR and SADV…TGVE. The segment covering 701-711 has biased composition (basic and acidic residues); sequence NGADIPREPVE. A compositionally biased stretch (polar residues) spans 718–727; it reads QSASQRTGVE.

The protein belongs to the UvrC family. Interacts with UvrB in an incision complex.

It is found in the cytoplasm. The UvrABC repair system catalyzes the recognition and processing of DNA lesions. UvrC both incises the 5' and 3' sides of the lesion. The N-terminal half is responsible for the 3' incision and the C-terminal half is responsible for the 5' incision. The protein is UvrABC system protein C of Rhodococcus jostii (strain RHA1).